Consider the following 195-residue polypeptide: Molybdenum cofactor guanylyltransferase (195 aa).

GTP-binding positions include 12–14 (LAG), Lys-25, Asn-53, Asp-70, and Asp-100. Asp-100 is a Mg(2+) binding site.

Belongs to the MobA family. Monomer. Requires Mg(2+) as cofactor.

The protein resides in the cytoplasm. The enzyme catalyses Mo-molybdopterin + GTP + H(+) = Mo-molybdopterin guanine dinucleotide + diphosphate. Functionally, transfers a GMP moiety from GTP to Mo-molybdopterin (Mo-MPT) cofactor (Moco or molybdenum cofactor) to form Mo-molybdopterin guanine dinucleotide (Mo-MGD) cofactor. The sequence is that of Molybdenum cofactor guanylyltransferase from Vibrio campbellii (strain ATCC BAA-1116).